The primary structure comprises 327 residues: Phosphate acyltransferase (327 aa).

It belongs to the PlsX family. In terms of assembly, homodimer. Probably interacts with PlsY.

It localises to the cytoplasm. The enzyme catalyses a fatty acyl-[ACP] + phosphate = an acyl phosphate + holo-[ACP]. It functions in the pathway lipid metabolism; phospholipid metabolism. Its function is as follows. Catalyzes the reversible formation of acyl-phosphate (acyl-PO(4)) from acyl-[acyl-carrier-protein] (acyl-ACP). This enzyme utilizes acyl-ACP as fatty acyl donor, but not acyl-CoA. This chain is Phosphate acyltransferase, found in Thermosipho africanus (strain TCF52B).